We begin with the raw amino-acid sequence, 393 residues long: Acetate kinase (393 aa).

Residue N6 participates in Mg(2+) binding. K13 is a binding site for ATP. R87 provides a ligand contact to substrate. The active-site Proton donor/acceptor is the D143. ATP is bound by residues 203-207 (HLGNG), 278-280 (DMR), and 326-330 (GIGEN). Position 380 (E380) interacts with Mg(2+).

It belongs to the acetokinase family. As to quaternary structure, homodimer. It depends on Mg(2+) as a cofactor. Mn(2+) serves as cofactor.

Its subcellular location is the cytoplasm. The catalysed reaction is acetate + ATP = acetyl phosphate + ADP. The protein operates within metabolic intermediate biosynthesis; acetyl-CoA biosynthesis; acetyl-CoA from acetate: step 1/2. Catalyzes the formation of acetyl phosphate from acetate and ATP. Can also catalyze the reverse reaction. This Mycoplasma mycoides subsp. mycoides SC (strain CCUG 32753 / NCTC 10114 / PG1) protein is Acetate kinase.